Reading from the N-terminus, the 434-residue chain is Quinolone resistance transporter (434 aa).

12 helical membrane passes run 15–35 (LIPA…AVGF), 45–65 (GIGD…YFLF), 85–105 (ILLT…PKSF), 110–130 (FLLG…ITQW), 142–162 (MFVL…GLLL), 175–195 (WLFV…FLWL), 241–261 (VLLL…LNLW), 275–295 (IQIG…LLII), 306–326 (YGHL…SGWL), 333–353 (LAAL…FWTL), 367–387 (IALI…GIGL), and 396–416 (AAGL…TYIV).

It belongs to the major facilitator superfamily.

The protein localises to the cell inner membrane. Efflux pump that mediates resistance to quinolone-type antibiotics. This Acinetobacter baumannii protein is Quinolone resistance transporter.